The chain runs to 567 residues: Organic cation transporter-like protein (567 aa).

Topologically, residues 1–21 (MGYDEAIIHLGDFGRYQKIIY) are cytoplasmic. Residues 22 to 42 (FLICLTSIPVAFHKLAGVFLL) traverse the membrane as a helical segment. Residues 43–127 (AKPDFRCALP…TEWNLVCGRD (85 aa)) lie on the Extracellular side of the membrane. Residues Asn-55, Asn-67, Asn-89, and Asn-97 are each glycosylated (N-linked (GlcNAc...) asparagine). Residues 128-148 (FMAATSDSLFMLGVLLGSIVF) traverse the membrane as a helical segment. Topologically, residues 149 to 158 (GQLSDKYGRK) are cytoplasmic. The chain crosses the membrane as a helical span at residues 159 to 179 (PILFASLVIQVLFGVLAGVAP). The Extracellular segment spans residues 180-189 (EYFTYTFARL). The helical transmembrane segment at 190-210 (MVGATTSGVFLVAYVVAMEMV) threads the bilayer. The Cytoplasmic portion of the chain corresponds to 211–219 (GPDKRLYAG). A helical membrane pass occupies residues 220–240 (IFVMMFFSVGFMLTAVFAYFV). Residues 241–244 (HDWR) are Extracellular-facing. Residues 245–265 (WLQIALTLPGLIFMFYYWIIP) form a helical membrane-spanning segment. The Cytoplasmic portion of the chain corresponds to 266 to 343 (ESARWLLLKG…LFCYPNLRRK (78 aa)). The interval 304–326 (LDEGENSEEKAKQKLEDQELDEG) is disordered. The segment covering 310–320 (SEEKAKQKLED) has biased composition (basic and acidic residues). A helical transmembrane segment spans residues 344–364 (TLLIFLDWLVTSGVYYGLSWN). Residues 365–371 (TSNLGGN) lie on the Extracellular side of the membrane. A helical membrane pass occupies residues 372–392 (VLLNFVISGAVEIPAYIFLLL). Residues 393 to 400 (TLNRWGRR) lie on the Cytoplasmic side of the membrane. Residues 401 to 421 (SILCGCLVMAGLSLLATVIIP) form a helical membrane-spanning segment. Over 422 to 427 (QRMHTL) the chain is Extracellular. A helical membrane pass occupies residues 428-448 (IVACAMLGKLAITASYGTVYI). Residues 449–462 (FSAEQFPTVVRNVA) are Cytoplasmic-facing. Residues 463–483 (LGAASMVARISGMMAPFLNFL) traverse the membrane as a helical segment. Over 484–489 (ATIWKP) the chain is Extracellular. A helical membrane pass occupies residues 490–510 (LPLLICGSLTLVAGLLSLLLP). Topologically, residues 511 to 567 (ETHNKPMLETIADGERFGKKTKADVYLETGQELRAPEAQPLKGSGETNGSTIANGHK) are cytoplasmic. Residues 546-567 (PEAQPLKGSGETNGSTIANGHK) are disordered. Residues 555–567 (GETNGSTIANGHK) show a composition bias toward polar residues.

This sequence belongs to the major facilitator (TC 2.A.1) superfamily. Organic cation transporter (TC 2.A.1.19) family.

It is found in the membrane. Its function is as follows. Probably transports organic cations. This Drosophila melanogaster (Fruit fly) protein is Organic cation transporter-like protein (Orct2).